We begin with the raw amino-acid sequence, 296 residues long: Porphobilinogen deaminase (296 aa).

Cysteine 232 carries the S-(dipyrrolylmethanemethyl)cysteine modification.

It belongs to the HMBS family. As to quaternary structure, monomer. The cofactor is dipyrromethane.

It carries out the reaction 4 porphobilinogen + H2O = hydroxymethylbilane + 4 NH4(+). Its pathway is porphyrin-containing compound metabolism; protoporphyrin-IX biosynthesis; coproporphyrinogen-III from 5-aminolevulinate: step 2/4. In terms of biological role, tetrapolymerization of the monopyrrole PBG into the hydroxymethylbilane pre-uroporphyrinogen in several discrete steps. This chain is Porphobilinogen deaminase, found in Corynebacterium aurimucosum (strain ATCC 700975 / DSM 44827 / CIP 107346 / CN-1) (Corynebacterium nigricans).